Consider the following 200-residue polypeptide: GTP-dependent dephospho-CoA kinase (200 aa).

GTP-binding residues include D56, V57, V58, D75, and E132.

This sequence belongs to the GTP-dependent DPCK family.

It carries out the reaction 3'-dephospho-CoA + GTP = GDP + CoA + H(+). The protein operates within cofactor biosynthesis; coenzyme A biosynthesis. In terms of biological role, catalyzes the GTP-dependent phosphorylation of the 3'-hydroxyl group of dephosphocoenzyme A to form coenzyme A (CoA). This is GTP-dependent dephospho-CoA kinase from Caldivirga maquilingensis (strain ATCC 700844 / DSM 13496 / JCM 10307 / IC-167).